We begin with the raw amino-acid sequence, 281 residues long: Beta-lactamase (281 aa).

The signal sequence occupies residues 1–24 (MKKLIFLIVIALVLSACNSNSSHA). Ser63 serves as the catalytic Acyl-ester intermediate. Residue 225–227 (KSG) coordinates substrate.

Belongs to the class-A beta-lactamase family.

The enzyme catalyses a beta-lactam + H2O = a substituted beta-amino acid. The chain is Beta-lactamase (blaZ) from Staphylococcus aureus.